Here is a 191-residue protein sequence, read N- to C-terminus: Small ribosomal subunit protein uS7 (191 aa).

The interval 56–80 is disordered; that stretch reads NKSGEQGDGDGESGGKAGGIKKRSL.

This sequence belongs to the universal ribosomal protein uS7 family. In terms of assembly, part of the 30S ribosomal subunit. Contacts proteins S9 and S11.

One of the primary rRNA binding proteins, it binds directly to 16S rRNA where it nucleates assembly of the head domain of the 30S subunit. Is located at the subunit interface close to the decoding center, probably blocks exit of the E-site tRNA. This chain is Small ribosomal subunit protein uS7, found in Coxiella burnetii (strain RSA 493 / Nine Mile phase I).